The sequence spans 523 residues: Cytochrome P450 monooxygenase ple5B (523 aa).

A helical transmembrane segment spans residues 16-33 (IAAAAAGSAVAVYKLLQL). N-linked (GlcNAc...) asparagine glycosylation is found at Asn82, Asn103, Asn122, Asn295, Asn379, and Asn423. Heme is bound at residue Cys446.

This sequence belongs to the cytochrome P450 family. Heme is required as a cofactor.

Its subcellular location is the membrane. Its pathway is secondary metabolite biosynthesis; terpenoid biosynthesis. Cytochrome P450 monooxygenase; part of the gene cluster that mediates the biosynthesis of pleuromutilin, a tricyclic diterpene showing antibacterial properties. The geranylgeranyl diphosphate (GGPP) synthase ple4 catalyzes the first step in pleuromutilin biosynthesis. GGPP is then substrate of the premutilin synthase (PS) ple3 to yield premutilin. Premutilin synthase is a bifunctional enzyme composed of the fusion of a class II diterpene cyclase (DTC) and a class I diterpene synthase (DTS), with the corresponding domains and active sites containing characteristic aspartate-rich motifs. GGPP is first converted to mutildienyl-diphosphate (MPP) at the class II DTC site. MPP is subsequently further cyclized at the class I DTS site, followed by a 1,5-hydride shift and addition of water prior to terminating deprotonation, to yield premutilin. The cytochrome P450 monooxygenases ple5 and ple6 hydroxylate premutilin at C-11 and C-3, respectively, producing 11-hydroxypremutilin and 3-hydroxypremutilin. The combination of the actions of both ple5 and ple6 leads to the production of 3,11-dihydroxypremutilin. The short chain dehydrogenase ple7 further converts 3,11-dihydroxypremutilin into mutilin. The acetyltransferase ple2 then acetylates mutilin to produce 14-O-acetylmutilin. Finally, the cytochrome P450 monooxygenase ple1 catalyzes hydroxylation on the alpha position of the acetyl side chain of 14-O-acetylmutilin to yield pleuromutilin. The chain is Cytochrome P450 monooxygenase ple5B from Rhodocybe pseudopiperita (Clitopilus pseudopiperitus).